An 889-amino-acid polypeptide reads, in one-letter code: Putative receptor-like protein kinase At3g46340 (889 aa).

The first 25 residues, 1-25, serve as a signal peptide directing secretion; that stretch reads MEFPHSVLLVVLIIATFAISNLVQA. Topologically, residues 26-514 are extracellular; sequence EEDQEGFISL…VITKKKFPVM (489 aa). N-linked (GlcNAc...) asparagine glycosylation is found at Asn185, Asn239, Asn259, Asn292, Asn316, Asn342, Asn366, Asn419, Asn435, Asn448, Asn467, and Asn474. LRR repeat units follow at residues 414–437, 438–460, and 462–483; these read RITS…QNLT, HLDK…LASM, and SLSF…ALLK. A helical membrane pass occupies residues 515-535; the sequence is IVALVSSAVVVILVVLVLIFV. Topologically, residues 536 to 889 are cytoplasmic; it reads FKKKKPSNLE…FDTKAVPSAR (354 aa). The segment at 544–566 is disordered; sequence LEDLPPSSNTPRENITSTSISDT. Residues 585-874 enclose the Protein kinase domain; that stretch reads KNLQRPLGEG…TQGMDSHSSF (290 aa). ATP contacts are provided by residues 591 to 599 and Lys614; that span reads LGEGGFGVV. Tyr659 bears the Phosphotyrosine mark. Asp711 acts as the Proton acceptor in catalysis. Position 745 is a phosphoserine (Ser745). Phosphothreonine occurs at positions 746 and 751. Tyr759 carries the post-translational modification Phosphotyrosine. Positions 863-889 are disordered; the sequence is NKTQGMDSHSSFEQSMSFDTKAVPSAR. The segment covering 864–880 has biased composition (polar residues); it reads KTQGMDSHSSFEQSMSF.

Belongs to the protein kinase superfamily. Ser/Thr protein kinase family.

It is found in the cell membrane. It carries out the reaction L-seryl-[protein] + ATP = O-phospho-L-seryl-[protein] + ADP + H(+). It catalyses the reaction L-threonyl-[protein] + ATP = O-phospho-L-threonyl-[protein] + ADP + H(+). The protein is Putative receptor-like protein kinase At3g46340 of Arabidopsis thaliana (Mouse-ear cress).